The chain runs to 661 residues: Sodium/potassium/calcium exchanger 2 (661 aa).

The Cytoplasmic portion of the chain corresponds to 1 to 38 (MDLQQSTTITSLEKWCLDESLSGCRRHYSVKKKLKLIR). Residues 39–59 (VLGLFMGLVAISTVSFSISAF) traverse the membrane as a helical segment. Over 60-132 (SETDTQSTGE…DIFSLEERRK (73 aa)) the chain is Extracellular. The interval 99 to 120 (PQPPLSKEGESENSTDHAQGDY) is disordered. A compositionally biased stretch (basic and acidic residues) spans 105-120 (KEGESENSTDHAQGDY). Asparagine 111 is a glycosylation site (N-linked (GlcNAc...) asparagine). The helical transmembrane segment at 133–153 (GAIILHVIGMIYMFIALAIVC) threads the bilayer. Residues 154–178 (DEFFVPSLTVITEKLGISDDVAGAT) lie on the Cytoplasmic side of the membrane. The stretch at 174–214 (VAGATFMAAGGSAPELFTSLIGVFIAHSNVGIGTIVGSAVF) is one Alpha-1 repeat. The helical transmembrane segment at 179–199 (FMAAGGSAPELFTSLIGVFIA) threads the bilayer. Residues 200-204 (HSNVG) lie on the Extracellular side of the membrane. Residues 205-225 (IGTIVGSAVFNILFVIGMCAL) form a helical membrane-spanning segment. Residues 226–243 (FSREILNLTWWPLFRDVS) lie on the Cytoplasmic side of the membrane. A helical transmembrane segment spans residues 244 to 264 (FYIVDLIMLIIFFLDNVIMWW). Position 265 (glutamate 265) is a topological domain, extracellular. The helical transmembrane segment at 266–286 (SLLLLTAYFCYVVFMKFNVQV) threads the bilayer. The Cytoplasmic portion of the chain corresponds to 287 to 497 (EKWVKQMINR…PDVRKPSSRK (211 aa)). Residues 306–336 (EAQAKPSAARDKDEPTLPAKPRLQRGGSSAS) form a disordered region. Serine 336 and serine 340 each carry phosphoserine. The segment at 397-439 (DENERQNGAANHVEKIELPNSTSTDVEMTPSSDASEPVQNGNL) is disordered. The span at 415 to 439 (PNSTSTDVEMTPSSDASEPVQNGNL) shows a compositional bias: polar residues. The helical transmembrane segment at 498 to 518 (FFPITFFGSITWIAVFSYLMV) threads the bilayer. The Extracellular portion of the chain corresponds to 519–533 (WWAHQVGETIGISEE). The chain crosses the membrane as a helical span at residues 534–554 (IMGLTILAAGTSIPDLITSVI). Residues 541–572 (AAGTSIPDLITSVIVARKGLGDMAVSSSVGSN) form an Alpha-2 repeat. Residues 555-569 (VARKGLGDMAVSSSV) are Cytoplasmic-facing. Residues 570 to 590 (GSNIFDITVGLPLPWLLYTVI) traverse the membrane as a helical segment. Topologically, residues 591 to 602 (HRFQPVAVSSNG) are extracellular. A helical membrane pass occupies residues 603-623 (LFCAIVLLFIMLLFVILSIAL). Topologically, residues 624 to 630 (CKWRMNK) are cytoplasmic. A helical membrane pass occupies residues 631–651 (ILGFIMFGLYFVFLVVSVLLE). Residues 652 to 661 (DRILTCPVSI) lie on the Extracellular side of the membrane.

This sequence belongs to the Ca(2+):cation antiporter (CaCA) (TC 2.A.19) family. SLC24A subfamily.

The protein localises to the cell membrane. The enzyme catalyses Ca(2+)(out) + K(+)(out) + 4 Na(+)(in) = Ca(2+)(in) + K(+)(in) + 4 Na(+)(out). Calcium, potassium:sodium antiporter that transports 1 Ca(2+) and 1 K(+) in exchange for 4 Na(+). Required for learming and memory by regulating neuronal Ca(2+), which is essential for the development of synaptic plasticity. The protein is Sodium/potassium/calcium exchanger 2 (SLC24A2) of Homo sapiens (Human).